Here is a 200-residue protein sequence, read N- to C-terminus: MQLNVSGAQAIEVSERTFGGEFNETLVHQAVVAYMAGGRQGSKAQKTRSEVSGGGKKPWRQKGTGRARAGTIRSPIWRGGGTTFAAKPRSHEQKLNKKMYRAALRSILAELVRLDRLVVVADFAVDAPKTKGLVAKLDTLGLKDVLIVTDGVDENLYLAARNLAHVDVRDVQGSDPVSLIAYDKVLVTVSAVKKFEELLG.

Residues glycine 38–glycine 65 are disordered.

The protein belongs to the universal ribosomal protein uL4 family. In terms of assembly, part of the 50S ribosomal subunit.

One of the primary rRNA binding proteins, this protein initially binds near the 5'-end of the 23S rRNA. It is important during the early stages of 50S assembly. It makes multiple contacts with different domains of the 23S rRNA in the assembled 50S subunit and ribosome. Its function is as follows. Forms part of the polypeptide exit tunnel. The polypeptide is Large ribosomal subunit protein uL4 (Pseudomonas aeruginosa (strain LESB58)).